We begin with the raw amino-acid sequence, 298 residues long: N-acetylmuramic acid 6-phosphate etherase (298 aa).

Residues 55–218 enclose the SIS domain; sequence IHAQVSGGGR…STGLMIKSGK (164 aa). The Proton donor role is filled by Glu-83. The active site involves Glu-114.

It belongs to the GCKR-like family. MurNAc-6-P etherase subfamily. As to quaternary structure, homodimer.

The catalysed reaction is N-acetyl-D-muramate 6-phosphate + H2O = N-acetyl-D-glucosamine 6-phosphate + (R)-lactate. Its pathway is amino-sugar metabolism; 1,6-anhydro-N-acetylmuramate degradation. It participates in amino-sugar metabolism; N-acetylmuramate degradation. The protein operates within cell wall biogenesis; peptidoglycan recycling. Its function is as follows. Specifically catalyzes the cleavage of the D-lactyl ether substituent of MurNAc 6-phosphate, producing GlcNAc 6-phosphate and D-lactate. Together with AnmK, is also required for the utilization of anhydro-N-acetylmuramic acid (anhMurNAc) either imported from the medium or derived from its own cell wall murein, and thus plays a role in cell wall recycling. The protein is N-acetylmuramic acid 6-phosphate etherase of Escherichia coli O7:K1 (strain IAI39 / ExPEC).